We begin with the raw amino-acid sequence, 86 residues long: Triple QxxK/R motif-containing protein (86 aa).

The chain crosses the membrane as a helical span at residues 51–71 (VGLVLAAILALLLAFYAFFYL).

Belongs to the TRIQK family.

The protein resides in the endoplasmic reticulum membrane. Its function is as follows. May play a role in cell growth and maintenance of cell morphology. In Homo sapiens (Human), this protein is Triple QxxK/R motif-containing protein (TRIQK).